A 101-amino-acid chain; its full sequence is Small ribosomal subunit protein uS14 (101 aa).

The protein belongs to the universal ribosomal protein uS14 family. In terms of assembly, part of the 30S ribosomal subunit. Contacts proteins S3 and S10.

Its function is as follows. Binds 16S rRNA, required for the assembly of 30S particles and may also be responsible for determining the conformation of the 16S rRNA at the A site. This is Small ribosomal subunit protein uS14 from Aliivibrio salmonicida (strain LFI1238) (Vibrio salmonicida (strain LFI1238)).